Reading from the N-terminus, the 551-residue chain is Palmdelphin (551 aa).

The residue at position 1 (Met1) is an N-acetylmethionine. Positions 12-106 (QAITDKRKIQ…LQISANEEVI (95 aa)) form a coiled coil. Lys125 is covalently cross-linked (Glycyl lysine isopeptide (Lys-Gly) (interchain with G-Cter in SUMO2)). Residues Ser135 and Ser163 each carry the phosphoserine modification. Lys178 participates in a covalent cross-link: Glycyl lysine isopeptide (Lys-Gly) (interchain with G-Cter in SUMO1); alternate. Lys178 participates in a covalent cross-link: Glycyl lysine isopeptide (Lys-Gly) (interchain with G-Cter in SUMO2); alternate. Residues 247–258 (ERNSKSPTEYHE) show a composition bias toward basic and acidic residues. The interval 247–267 (ERNSKSPTEYHEPVYANPFCR) is disordered. The residue at position 270 (Thr270) is a Phosphothreonine. Disordered stretches follow at residues 298–387 (HESE…CSSP) and 452–536 (EDDE…DPSL). Residues Ser322, Ser350, Ser371, Ser376, Ser385, and Ser386 each carry the phosphoserine modification. Residues 484–495 (KRSEVSPHENTN) are compositionally biased toward basic and acidic residues. Residues Ser498, Ser515, and Ser520 each carry the phosphoserine modification.

This sequence belongs to the paralemmin family. In terms of assembly, interacts with GLUL. Post-translationally, phosphorylated. Expressed in the brain and the spinal cord. Expressed in the anterior olfactory nucleus, the olfactory tubercle, the nucleus supraopticus, the nucleus of the lateral olfactory tract, the piriform cortex, the cortico-amygdaloid transition zone, the septofimbrial nucleus and the indusium griseum (at protein level).

The protein resides in the cytoplasm. It is found in the cell projection. Its subcellular location is the dendrite. The protein localises to the dendritic spine. The sequence is that of Palmdelphin (Palmd) from Rattus norvegicus (Rat).